Consider the following 369-residue polypeptide: S-(hydroxymethyl)glutathione dehydrogenase (369 aa).

Zn(2+) is bound by residues cysteine 40, histidine 62, cysteine 92, cysteine 95, cysteine 98, cysteine 106, and cysteine 169.

This sequence belongs to the zinc-containing alcohol dehydrogenase family. Class-III subfamily. Homodimer. It depends on Zn(2+) as a cofactor.

Its subcellular location is the cytoplasm. The catalysed reaction is S-(hydroxymethyl)glutathione + NADP(+) = S-formylglutathione + NADPH + H(+). It carries out the reaction S-(hydroxymethyl)glutathione + NAD(+) = S-formylglutathione + NADH + H(+). It catalyses the reaction a primary alcohol + NAD(+) = an aldehyde + NADH + H(+). The enzyme catalyses a secondary alcohol + NAD(+) = a ketone + NADH + H(+). The catalysed reaction is S-nitrosoglutathione + NADH + H(+) = S-(hydroxysulfenamide)glutathione + NAD(+). Its function is as follows. Has high formaldehyde dehydrogenase activity in the presence of glutathione and catalyzes the oxidation of normal alcohols in a reaction that is not GSH-dependent. In addition, hemithiolacetals other than those formed from GSH, including omega-thiol fatty acids, also are substrates. Also acts as a S-nitroso-glutathione reductase by catalyzing the NADH-dependent reduction of S-nitrosoglutathione. The sequence is that of S-(hydroxymethyl)glutathione dehydrogenase (frmA) from Escherichia coli (strain SMS-3-5 / SECEC).